The chain runs to 579 residues: Potassium-transporting ATPase potassium-binding subunit (579 aa).

10 consecutive transmembrane segments (helical) span residues 2-22 (MNLVLQYGLYILILVVLAIPL), 66-86 (SFSVLAFSIISLIVLFLIHIF), 135-155 (GLTVQNFVSAAVGISVLFALI), 177-197 (VLYILIPLSIVVSLALVSQGV), 262-282 (LSNLFEMISLLLIPVALCFTF), 292-312 (GIAIFIAMGIMLVVAMGIIGV), 391-411 (VFGGVGCGLYGMIGFAILAVF), 437-457 (VLVCLATPIAILIGSGIASIL), 490-510 (FAGFAANTPFINISIGLSMLF), and 546-566 (FIGLLIFVVLLIGALSFFPAL).

The protein belongs to the KdpA family. As to quaternary structure, the system is composed of three essential subunits: KdpA, KdpB and KdpC.

The protein localises to the cell membrane. Part of the high-affinity ATP-driven potassium transport (or Kdp) system, which catalyzes the hydrolysis of ATP coupled with the electrogenic transport of potassium into the cytoplasm. This subunit binds the extracellular potassium ions and delivers the ions to the membrane domain of KdpB through an intramembrane tunnel. In Clostridium botulinum (strain Alaska E43 / Type E3), this protein is Potassium-transporting ATPase potassium-binding subunit.